The following is a 650-amino-acid chain: FAS-associated factor 1 (650 aa).

The 57-residue stretch at 1 to 57 (MASNMDREMILADFQACTGIENIDEAITLLEQNNWDLVAAINGVIPQENGILQSEYG) folds into the UBA domain. The tract at residues 62 to 87 (PGPAFNPASHPASAPTSSSSSAFRPV) is disordered. Low complexity predominate over residues 68–83 (PASHPASAPTSSSSSA). Ser-320 carries the phosphoserine modification. One can recognise a UBX domain in the interval 569–646 (NAEPVSKLRI…KLFPQETLFL (78 aa)). Thr-580 bears the Phosphothreonine mark. Ser-582 carries the post-translational modification Phosphoserine.

In terms of assembly, interacts with CDT1 and ATPase VCP/p97. Interacts (via UBA domain) with FAS (via death domain). Interacts (via UBA domain) with NLRP12 (via DAPIN/PYRIN domain). Most abundant in testis, slightly less abundant in skeletal muscle and heart, followed by prostate, thymus, ovary, small intestine, and colon. Not detected in the peripheral blood leukocytes.

It is found in the nucleus. In terms of biological role, ubiquitin-binding protein. Required for the progression of DNA replication forks by targeting DNA replication licensing factor CDT1 for degradation. Potentiates but cannot initiate FAS-induced apoptosis. This chain is FAS-associated factor 1 (FAF1), found in Homo sapiens (Human).